We begin with the raw amino-acid sequence, 76 residues long: Kappa-actitoxin-Avd4g (76 aa).

An N-terminal signal peptide occupies residues Met1–Ala19. Residues Ala20–Phe31 constitute a propeptide that is removed on maturation. Disulfide bonds link Cys37-Cys72, Cys39-Cys65, and Cys55-Cys73.

It belongs to the sea anemone type 3 (BDS) potassium channel toxin family. As to expression, moderately expressed in the ectodermal tissue from the distal and proximal tentacles, body wall, and oral disk.

Its subcellular location is the secreted. The protein resides in the nematocyst. Functionally, blocks Kv3 voltage-gated potassium channels. Reduces blood pressure. This chain is Kappa-actitoxin-Avd4g, found in Anemonia viridis (Snakelocks anemone).